The primary structure comprises 4700 residues: StAR-related lipid transfer protein 9 (4700 aa).

In terms of domain architecture, Kinesin motor spans 3 to 384; that stretch reads NVQVAVRVRP…LRYASSAKNI (382 aa). Residue 103–110 participates in ATP binding; sequence GQTGSGKT. Over residues 310-328 the composition is skewed to low complexity; sequence GDSGILSSPSGTSSGGAPS. The tract at residues 310-331 is disordered; sequence GDSGILSSPSGTSSGGAPSRRQ. An FHA domain is found at 498-569; it reads LKEGTTKIGR…LTQGAVITLG (72 aa). Composition is skewed to basic and acidic residues over residues 631-646 and 867-877; these read QCDE…ETSH and TSEKTSSEEHL. Disordered stretches follow at residues 631–652, 851–880, 1057–1104, and 1128–1188; these read QCDE…QIQQ, WDPS…LPQA, KKSS…SDTD, and ERKW…GFTA. Acidic residues predominate over residues 1134-1146; it reads PEPENSESDDSQL. Residue Ser-1203 is modified to Phosphoserine. Disordered stretches follow at residues 1939 to 1976, 2014 to 2043, 2088 to 2179, 2254 to 2290, 2377 to 2403, 2416 to 2444, 2479 to 2539, 2589 to 2613, 2642 to 2678, 2696 to 2731, 2765 to 2789, 2821 to 2852, 2892 to 2955, 3124 to 3144, 3199 to 3241, 3274 to 3412, 3564 to 3611, 3766 to 3790, 3830 to 3884, 3906 to 3991, 4033 to 4086, and 4153 to 4193; these read MPGE…EGKN, ERNP…RVNN, DQKE…PARD, ESQV…QEEN, GVEH…SSEA, MGSH…SPQD, LNKV…PRLL, RVAG…EGEA, LSAD…RKRR, SSSS…PVEE, PQET…PRTL, VQNS…ASPK, SKHS…PCRQ, NAQV…PHTL, HTCS…GLDG, SLRQ…MPST, IALG…KGSA, SDTS…AEET, LPSV…RVQK, ASTQ…SPKL, PEKV…QHLS, and PGGL…EWSK. Over residues 2088–2100 the composition is skewed to basic and acidic residues; the sequence is DQKEQEKTDHAFR. Residues 2103–2118 show a composition bias toward polar residues; it reads SSGNPLPSKDQPSSPR. The segment covering 2119-2129 has biased composition (basic and acidic residues); sequence QTDDTVFRDSE. Over residues 2137–2148 the composition is skewed to polar residues; the sequence is SIGNHPQVQKIT. Residues 2153–2169 are compositionally biased toward basic and acidic residues; that stretch reads RSREGVRESEPVREHTH. Residues 2254 to 2266 show a composition bias toward polar residues; the sequence is ESQVAEHVSSSNQ. Basic and acidic residues-rich tracts occupy residues 2267-2279 and 2379-2391; these read EEPK…EEMP and EHQD…RSHS. Positions 2500 to 2510 are enriched in basic and acidic residues; sequence QASKPRQKAEK. The segment covering 2642–2653 has biased composition (polar residues); that stretch reads LSADSFESLPNT. Positions 2712-2729 are enriched in low complexity; sequence PSSADPLAPDSPRSSAPV. The span at 2916 to 2925 shows a compositional bias: basic and acidic residues; it reads APCRHPREAL. Positions 3124-3141 are enriched in polar residues; sequence NAQVCQTNPEPPATTQGP. Polar residues-rich tracts occupy residues 3274–3285, 3320–3339, and 3368–3387; these read SLRQNETPQPAA, SSPT…QELN, and SGKS…QKAS. Basic and acidic residues predominate over residues 3388-3397; sequence SRLDDGTTDH. The segment covering 3857–3872 has biased composition (low complexity); sequence SSPSPSSPHSPGLFPS. The segment covering 3906–3924 has biased composition (polar residues); it reads ASTQEPGLSPGSLTLSAPS. Residues 3958–3975 are compositionally biased toward low complexity; the sequence is LGGSQRGRSSLQRSNGRS. Residues 4048–4065 are compositionally biased toward polar residues; the sequence is EPSQWQSRTENGGESSAS. Residues 4334-4387 are a coiled coil; that stretch reads SDIELMLQDYQQAHEEAKVEIARARDQLRERTEQEKLRIHQKIISQLLKEEDKL. Positions 4397 to 4411 are enriched in low complexity; the sequence is CTSSNGSLSSGMTSG. A disordered region spans residues 4397-4419; it reads CTSSNGSLSSGMTSGYNSSPALS. The START domain maps to 4483 to 4700; sequence SYQDLAKHVV…IARLASFLGR (218 aa).

It belongs to the TRAFAC class myosin-kinesin ATPase superfamily. Kinesin family. Interacts with ATAD3A. Expressed in the central nervous system, muscle cells (heart and skeletal muscle), pancreas, prostate and lung.

It localises to the cytoplasm. The protein resides in the cytoskeleton. Its subcellular location is the microtubule organizing center. It is found in the centrosome. The protein localises to the centriole. It localises to the nucleus. Its function is as follows. Microtubule-dependent motor protein required for spindle pole assembly during mitosis. Required to stabilize the pericentriolar material (PCM). This is StAR-related lipid transfer protein 9 (STARD9) from Homo sapiens (Human).